Reading from the N-terminus, the 126-residue chain is Small ribosomal subunit protein eS6 (126 aa).

It belongs to the eukaryotic ribosomal protein eS6 family.

The polypeptide is Small ribosomal subunit protein eS6 (Methanothermobacter thermautotrophicus (strain ATCC 29096 / DSM 1053 / JCM 10044 / NBRC 100330 / Delta H) (Methanobacterium thermoautotrophicum)).